Consider the following 668-residue polypeptide: Fructose-1,6-bisphosphatase class 3 (668 aa).

Belongs to the FBPase class 3 family. Requires Mn(2+) as cofactor.

The enzyme catalyses beta-D-fructose 1,6-bisphosphate + H2O = beta-D-fructose 6-phosphate + phosphate. The protein operates within carbohydrate biosynthesis; gluconeogenesis. The sequence is that of Fructose-1,6-bisphosphatase class 3 from Clostridium botulinum (strain ATCC 19397 / Type A).